The chain runs to 72 residues: Brevinin-2SN4 (72 aa).

The first 22 residues, 1–22 (MFTMKKPMLLLFFLGMISMSLC), serve as a signal peptide directing secretion. The propeptide at 23 to 40 (QDERGADEDDGGEMTEEE) is removed in mature form. Cys-66 and Cys-72 are disulfide-bonded.

This sequence belongs to the frog skin active peptide (FSAP) family. Brevinin subfamily. Expressed by the skin glands.

Its subcellular location is the secreted. Functionally, antimicrobial peptide. Active against a variety of Gram-negative and Gram-positive bacterial strains. Not active against fungi. Shows very weak hemolytic activity against human erythrocytes. The polypeptide is Brevinin-2SN4 (Sylvirana spinulosa (Fine-spined frog)).